Here is a 492-residue protein sequence, read N- to C-terminus: Glutamyl-tRNA(Gln) amidotransferase subunit A (492 aa).

Residues Lys78 and Ser158 each act as charge relay system in the active site. Ser182 serves as the catalytic Acyl-ester intermediate.

It belongs to the amidase family. GatA subfamily. As to quaternary structure, heterotrimer of A, B and C subunits.

The enzyme catalyses L-glutamyl-tRNA(Gln) + L-glutamine + ATP + H2O = L-glutaminyl-tRNA(Gln) + L-glutamate + ADP + phosphate + H(+). Its function is as follows. Allows the formation of correctly charged Gln-tRNA(Gln) through the transamidation of misacylated Glu-tRNA(Gln) in organisms which lack glutaminyl-tRNA synthetase. The reaction takes place in the presence of glutamine and ATP through an activated gamma-phospho-Glu-tRNA(Gln). In Rhodopseudomonas palustris (strain HaA2), this protein is Glutamyl-tRNA(Gln) amidotransferase subunit A.